We begin with the raw amino-acid sequence, 243 residues long: Voltage-gated monoatomic cation channel TMEM109 (243 aa).

An N-terminal signal peptide occupies residues 1–33; it reads MAASSISSPWGKHVFKAILMVLVALILLHSALA. Residues 34 to 83 lie on the Lumenal side of the membrane; sequence QSRRDFAPPGQQKREAPVDVLTQIGRSVRGTLDAWIGPETMHLVSESSSQ. The helical transmembrane segment at 84-104 threads the bilayer; it reads VLWAISSAISVAFFALSGIAA. Over 105–135 the chain is Cytoplasmic; the sequence is QLLNALGLAGDYLAQGLKLSPGQVQTFLLWG. The helical transmembrane segment at 136–156 threads the bilayer; sequence AGALVVYWLLSLLLGLVLALL. Over 157–185 the chain is Lumenal; it reads GRILWGLKLVIFLAGFVALMRSVPDPSTR. The helical transmembrane segment at 186–205 threads the bilayer; that stretch reads ALLLLALLILYALLSRLTGS. At 206-243 the chain is on the cytoplasmic side; that stretch reads RASGAQLEAKVRGLERQVEELRWRQRRAAKGARSVEEE.

As to quaternary structure, homooligomer. Interacts with CRYAB; in the cellular response to DNA damage.

The protein localises to the nucleus outer membrane. It is found in the endoplasmic reticulum membrane. It localises to the sarcoplasmic reticulum membrane. The catalysed reaction is K(+)(in) = K(+)(out). The enzyme catalyses Ca(2+)(in) = Ca(2+)(out). Functionally, functions as a voltage-gated monoatomic cation channel permeable to both potassium and calcium. Plays a role in the cellular response to DNA damage. This Homo sapiens (Human) protein is Voltage-gated monoatomic cation channel TMEM109.